The following is a 218-amino-acid chain: Probable nicotinate-nucleotide adenylyltransferase (218 aa).

The protein belongs to the NadD family.

The enzyme catalyses nicotinate beta-D-ribonucleotide + ATP + H(+) = deamido-NAD(+) + diphosphate. It participates in cofactor biosynthesis; NAD(+) biosynthesis; deamido-NAD(+) from nicotinate D-ribonucleotide: step 1/1. Functionally, catalyzes the reversible adenylation of nicotinate mononucleotide (NaMN) to nicotinic acid adenine dinucleotide (NaAD). This Acidithiobacillus ferrooxidans (strain ATCC 23270 / DSM 14882 / CIP 104768 / NCIMB 8455) (Ferrobacillus ferrooxidans (strain ATCC 23270)) protein is Probable nicotinate-nucleotide adenylyltransferase.